Here is a 378-residue protein sequence, read N- to C-terminus: Phosphoserine aminotransferase (378 aa).

Arginine 53 contributes to the L-glutamate binding site. Tryptophan 117, threonine 167, aspartate 190, and glutamine 213 together coordinate pyridoxal 5'-phosphate. An N6-(pyridoxal phosphate)lysine modification is found at lysine 214. 255-256 (NT) lines the pyridoxal 5'-phosphate pocket.

Belongs to the class-V pyridoxal-phosphate-dependent aminotransferase family. SerC subfamily. As to quaternary structure, homodimer. Pyridoxal 5'-phosphate is required as a cofactor.

The protein resides in the cytoplasm. The enzyme catalyses O-phospho-L-serine + 2-oxoglutarate = 3-phosphooxypyruvate + L-glutamate. The catalysed reaction is 4-(phosphooxy)-L-threonine + 2-oxoglutarate = (R)-3-hydroxy-2-oxo-4-phosphooxybutanoate + L-glutamate. Its pathway is amino-acid biosynthesis; L-serine biosynthesis; L-serine from 3-phospho-D-glycerate: step 2/3. It participates in cofactor biosynthesis; pyridoxine 5'-phosphate biosynthesis; pyridoxine 5'-phosphate from D-erythrose 4-phosphate: step 3/5. In terms of biological role, catalyzes the reversible conversion of 3-phosphohydroxypyruvate to phosphoserine and of 3-hydroxy-2-oxo-4-phosphonooxybutanoate to phosphohydroxythreonine. The chain is Phosphoserine aminotransferase from Ralstonia nicotianae (strain ATCC BAA-1114 / GMI1000) (Ralstonia solanacearum).